Consider the following 522-residue polypeptide: 3-octaprenyl-4-hydroxybenzoate carboxy-lyase (522 aa).

N181 lines the Mn(2+) pocket. Prenylated FMN-binding positions include 184 to 186 (IYR), 198 to 200 (RWL), and 203 to 204 (RG). Mn(2+) is bound at residue E247. The active-site Proton donor is the D322.

It belongs to the UbiD family. In terms of assembly, homohexamer. Prenylated FMN serves as cofactor. Mn(2+) is required as a cofactor.

Its subcellular location is the cell membrane. The catalysed reaction is a 4-hydroxy-3-(all-trans-polyprenyl)benzoate + H(+) = a 2-(all-trans-polyprenyl)phenol + CO2. Its pathway is cofactor biosynthesis; ubiquinone biosynthesis. Its function is as follows. Catalyzes the decarboxylation of 3-octaprenyl-4-hydroxy benzoate to 2-octaprenylphenol, an intermediate step in ubiquinone biosynthesis. The sequence is that of 3-octaprenyl-4-hydroxybenzoate carboxy-lyase from Paraburkholderia xenovorans (strain LB400).